Consider the following 427-residue polypeptide: UDP-N-acetylglucosamine 1-carboxyvinyltransferase 1 (427 aa).

Residue 23–24 (KN) coordinates phosphoenolpyruvate. A UDP-N-acetyl-alpha-D-glucosamine-binding site is contributed by arginine 96. Cysteine 120 (proton donor) is an active-site residue. The residue at position 120 (cysteine 120) is a 2-(S-cysteinyl)pyruvic acid O-phosphothioketal. Residues 125-129 (RPIDL), aspartate 309, and valine 331 contribute to the UDP-N-acetyl-alpha-D-glucosamine site.

It belongs to the EPSP synthase family. MurA subfamily.

It is found in the cytoplasm. It carries out the reaction phosphoenolpyruvate + UDP-N-acetyl-alpha-D-glucosamine = UDP-N-acetyl-3-O-(1-carboxyvinyl)-alpha-D-glucosamine + phosphate. The protein operates within cell wall biogenesis; peptidoglycan biosynthesis. In terms of biological role, cell wall formation. Adds enolpyruvyl to UDP-N-acetylglucosamine. This chain is UDP-N-acetylglucosamine 1-carboxyvinyltransferase 1, found in Streptococcus pneumoniae (strain ATCC BAA-255 / R6).